A 527-amino-acid polypeptide reads, in one-letter code: Chorismate synthase (527 aa).

Catalysis depends on residues histidine 17, histidine 104, and aspartate 485.

The protein belongs to the chorismate synthase family.

Its subcellular location is the cytoplasm. The protein localises to the cytosol. The catalysed reaction is 5-O-(1-carboxyvinyl)-3-phosphoshikimate = chorismate + phosphate. The enzyme catalyses FMNH2 + NADP(+) = FMN + NADPH + 2 H(+). Its pathway is metabolic intermediate biosynthesis; chorismate biosynthesis; chorismate from D-erythrose 4-phosphate and phosphoenolpyruvate: step 7/7. Bifunctional chorismate synthase and flavin reductase. Catalyzes the conversion of 5-enolpyruvylshikimate 3-phosphate (EPSP) to form chorismate. Acts also as a flavin reductase (FR) able to generate reduced flavin mononucleotide in the presence of NADPH. In Plasmodium falciparum (isolate 3D7), this protein is Chorismate synthase.